The sequence spans 396 residues: Protein-export membrane protein SecD (396 aa).

Transmembrane regions (helical) follow at residues 12 to 32 (ILIL…KGLD), 243 to 263 (LKGT…IVSI), 272 to 292 (IPIL…ASLI), 298 to 318 (LPSI…QIVI), 338 to 358 (FFII…LFVL), and 360 to 380 (VGML…GIFI).

It belongs to the SecD/SecF family. SecD subfamily. Part of the protein translocation apparatus. Forms a complex with SecF.

Its subcellular location is the cell membrane. Involved in protein export. The chain is Protein-export membrane protein SecD from Methanocaldococcus jannaschii (strain ATCC 43067 / DSM 2661 / JAL-1 / JCM 10045 / NBRC 100440) (Methanococcus jannaschii).